Consider the following 209-residue polypeptide: Uracil phosphoribosyltransferase (209 aa).

Residues R79, R104, and 131 to 139 (DPMLATGGS) contribute to the 5-phospho-alpha-D-ribose 1-diphosphate site. Uracil-binding positions include I194 and 199–201 (GDA). Residue D200 coordinates 5-phospho-alpha-D-ribose 1-diphosphate.

It belongs to the UPRTase family. Requires Mg(2+) as cofactor.

It carries out the reaction UMP + diphosphate = 5-phospho-alpha-D-ribose 1-diphosphate + uracil. The protein operates within pyrimidine metabolism; UMP biosynthesis via salvage pathway; UMP from uracil: step 1/1. With respect to regulation, allosterically activated by GTP. Functionally, catalyzes the conversion of uracil and 5-phospho-alpha-D-ribose 1-diphosphate (PRPP) to UMP and diphosphate. This Agathobacter rectalis (strain ATCC 33656 / DSM 3377 / JCM 17463 / KCTC 5835 / VPI 0990) (Eubacterium rectale) protein is Uracil phosphoribosyltransferase.